The sequence spans 234 residues: Large ribosomal subunit protein uL1 (234 aa).

It belongs to the universal ribosomal protein uL1 family. As to quaternary structure, part of the 50S ribosomal subunit.

In terms of biological role, binds directly to 23S rRNA. The L1 stalk is quite mobile in the ribosome, and is involved in E site tRNA release. Its function is as follows. Protein L1 is also a translational repressor protein, it controls the translation of the L11 operon by binding to its mRNA. The protein is Large ribosomal subunit protein uL1 of Helicobacter hepaticus (strain ATCC 51449 / 3B1).